Reading from the N-terminus, the 276-residue chain is NADPH-dependent 7-cyano-7-deazaguanine reductase (276 aa).

Residue 83-85 (IES) coordinates substrate. NADPH is bound at residue 85–86 (SK). Cysteine 184 functions as the Thioimide intermediate in the catalytic mechanism. Aspartate 191 (proton donor) is an active-site residue. 223 to 224 (HE) provides a ligand contact to substrate. 252–253 (RG) lines the NADPH pocket.

It belongs to the GTP cyclohydrolase I family. QueF type 2 subfamily. In terms of assembly, homodimer.

It localises to the cytoplasm. It carries out the reaction 7-aminomethyl-7-carbaguanine + 2 NADP(+) = 7-cyano-7-deazaguanine + 2 NADPH + 3 H(+). The protein operates within tRNA modification; tRNA-queuosine biosynthesis. In terms of biological role, catalyzes the NADPH-dependent reduction of 7-cyano-7-deazaguanine (preQ0) to 7-aminomethyl-7-deazaguanine (preQ1). This Pseudomonas fluorescens (strain ATCC BAA-477 / NRRL B-23932 / Pf-5) protein is NADPH-dependent 7-cyano-7-deazaguanine reductase.